The chain runs to 209 residues: Uracil phosphoribosyltransferase (209 aa).

5-phospho-alpha-D-ribose 1-diphosphate is bound by residues arginine 79, arginine 104, and 131 to 139; that span reads DPMLATGAS. Residues isoleucine 194 and 199-201 each bind uracil; that span reads GDA. Aspartate 200 provides a ligand contact to 5-phospho-alpha-D-ribose 1-diphosphate.

Belongs to the UPRTase family. Requires Mg(2+) as cofactor.

It carries out the reaction UMP + diphosphate = 5-phospho-alpha-D-ribose 1-diphosphate + uracil. Its pathway is pyrimidine metabolism; UMP biosynthesis via salvage pathway; UMP from uracil: step 1/1. Its activity is regulated as follows. Allosterically activated by GTP. Its function is as follows. Catalyzes the conversion of uracil and 5-phospho-alpha-D-ribose 1-diphosphate (PRPP) to UMP and diphosphate. This Staphylococcus carnosus (strain TM300) protein is Uracil phosphoribosyltransferase.